The following is a 395-amino-acid chain: MEDVSESDNNVETSIIHLPDDCLSFIFQRLDSVADHDSFGLTCHRWLNIQNISRRSLQFQCSFSVLNPSSLSQTNPDVSSHHLHRLLTRFQWLEHLSLSGCTVLNDSSLDSLRYPGARLHTLYLDCCFGISDDGISTIASFCPNLSVVSLYRCNISDIGLETLARASLSLKCVNLSYCPLVSDFGIKALSQACLQLESVKISNCKSITGVGFSGCSPTLGYVDADSCQLEPKGITGIISGGGIEFLNISGVSCYIRKDGLVPIGSGIASKLRILNLRMCRTVGDESIEAIAKGCPLLQEWNLALCHEVKISGWEAVGKWCRNLKKLHVNRCRNLCDQGLLALRCGCMNLQILYMNGNARLTPTAIEMFRLHRADITLRTEEMMVIGPDWRLYAQE.

The 49-residue stretch at 13–61 (TSIIHLPDDCLSFIFQRLDSVADHDSFGLTCHRWLNIQNISRRSLQFQC) folds into the F-box domain. LRR repeat units follow at residues 75-100 (NPDV…SLSG), 101-126 (CTVL…YLDC), 127-152 (CFGI…SLYR), 154-177 (NISD…NLSY), 178-203 (CPLV…KISN), 226-250 (SCQL…NISG), 252-278 (SCYI…NLRM), 279-304 (CRTV…NLAL), 305-330 (CHEV…HVNR), and 331-356 (CRNL…YMNG).

In Arabidopsis thaliana (Mouse-ear cress), this protein is F-box/LRR-repeat protein 12 (FBL12).